The sequence spans 215 residues: Nucleoside triphosphate pyrophosphatase (215 aa).

Asp77 acts as the Proton acceptor in catalysis.

It belongs to the Maf family. The cofactor is a divalent metal cation.

The protein resides in the cytoplasm. It catalyses the reaction a ribonucleoside 5'-triphosphate + H2O = a ribonucleoside 5'-phosphate + diphosphate + H(+). It carries out the reaction a 2'-deoxyribonucleoside 5'-triphosphate + H2O = a 2'-deoxyribonucleoside 5'-phosphate + diphosphate + H(+). Functionally, nucleoside triphosphate pyrophosphatase. May have a dual role in cell division arrest and in preventing the incorporation of modified nucleotides into cellular nucleic acids. This is Nucleoside triphosphate pyrophosphatase from Rickettsia africae (strain ESF-5).